Reading from the N-terminus, the 124-residue chain is NADH-quinone oxidoreductase subunit A (124 aa).

3 consecutive transmembrane segments (helical) span residues 11-31 (YLPIAIFFGIATLVSSLIMIL), 68-88 (LVAILFIIFDLEITFLVPWAI), and 93-113 (IGKIGFFSMMFFLFVLTIGFV).

Belongs to the complex I subunit 3 family. In terms of assembly, NDH-1 is composed of 14 different subunits. Subunits NuoA, H, J, K, L, M, N constitute the membrane sector of the complex.

It is found in the cell inner membrane. It catalyses the reaction a quinone + NADH + 5 H(+)(in) = a quinol + NAD(+) + 4 H(+)(out). In terms of biological role, NDH-1 shuttles electrons from NADH, via FMN and iron-sulfur (Fe-S) centers, to quinones in the respiratory chain. The immediate electron acceptor for the enzyme in this species is believed to be ubiquinone. Couples the redox reaction to proton translocation (for every two electrons transferred, four hydrogen ions are translocated across the cytoplasmic membrane), and thus conserves the redox energy in a proton gradient. The protein is NADH-quinone oxidoreductase subunit A of Rickettsia bellii (strain RML369-C).